We begin with the raw amino-acid sequence, 474 residues long: Methylenetetrahydrofolate--tRNA-(uracil-5-)-methyltransferase TrmFO (474 aa).

Residue 9–14 (GGGLAG) participates in FAD binding. A disordered region spans residues 425–451 (PPLERMPRNETGKRLRGPEKAALKKRA). Residues 429–451 (RMPRNETGKRLRGPEKAALKKRA) show a composition bias toward basic and acidic residues.

It belongs to the MnmG family. TrmFO subfamily. Requires FAD as cofactor.

Its subcellular location is the cytoplasm. The catalysed reaction is uridine(54) in tRNA + (6R)-5,10-methylene-5,6,7,8-tetrahydrofolate + NADH + H(+) = 5-methyluridine(54) in tRNA + (6S)-5,6,7,8-tetrahydrofolate + NAD(+). It catalyses the reaction uridine(54) in tRNA + (6R)-5,10-methylene-5,6,7,8-tetrahydrofolate + NADPH + H(+) = 5-methyluridine(54) in tRNA + (6S)-5,6,7,8-tetrahydrofolate + NADP(+). In terms of biological role, catalyzes the folate-dependent formation of 5-methyl-uridine at position 54 (M-5-U54) in all tRNAs. This Methylorubrum populi (strain ATCC BAA-705 / NCIMB 13946 / BJ001) (Methylobacterium populi) protein is Methylenetetrahydrofolate--tRNA-(uracil-5-)-methyltransferase TrmFO.